The following is a 1580-amino-acid chain: Pentafunctional AROM polypeptide (1580 aa).

The 3-dehydroquinate synthase stretch occupies residues 1 to 381 (MATPTVIKIL…HEQKASVVSN (381 aa)). NAD(+) contacts are provided by residues 44–46 (DTT), 81–84 (EVSK), 114–116 (GGV), and aspartate 119. A 7-phospho-2-dehydro-3-deoxy-D-arabino-heptonate-binding site is contributed by arginine 130. Residue 139 to 140 (TT) participates in NAD(+) binding. Aspartate 146 and lysine 152 together coordinate 7-phospho-2-dehydro-3-deoxy-D-arabino-heptonate. Lysine 161 provides a ligand contact to NAD(+). Asparagine 162 lines the 7-phospho-2-dehydro-3-deoxy-D-arabino-heptonate pocket. NAD(+)-binding positions include 179–182 (FLNT) and asparagine 190. Residue glutamate 194 participates in Zn(2+) binding. Lysine 247 is a binding site for 7-phospho-2-dehydro-3-deoxy-D-arabino-heptonate. Catalysis depends on glutamate 257, which acts as the Proton acceptor; for 3-dehydroquinate synthase activity. Residues 261 to 265 (RNLLN) and histidine 268 each bind 7-phospho-2-dehydro-3-deoxy-D-arabino-heptonate. Histidine 268 is a binding site for Zn(2+). Histidine 272 serves as the catalytic Proton acceptor; for 3-dehydroquinate synthase activity. Histidine 284 and lysine 353 together coordinate 7-phospho-2-dehydro-3-deoxy-D-arabino-heptonate. Histidine 284 is a binding site for Zn(2+). The segment at 394–838 (VSPGVPHALE…WDTLAQLFKA (445 aa)) is EPSP synthase. Cysteine 820 (for EPSP synthase activity) is an active-site residue. Residues 857–1048 (ASLFIIGMRG…KKKPQSFFVS (192 aa)) are shikimate kinase. 863 to 870 (GMRGAGKT) provides a ligand contact to ATP. Residues 1049-1269 (LTLPDLRPSV…AAPGQLSAKE (221 aa)) form a 3-dehydroquinase region. The active-site Proton acceptor; for 3-dehydroquinate dehydratase activity is histidine 1172. Lysine 1200 acts as the Schiff-base intermediate with substrate; for 3-dehydroquinate dehydratase activity in catalysis. Positions 1282–1580 (SKKFAIVGKP…AAVMNADADI (299 aa)) are shikimate dehydrogenase.

The protein in the N-terminal section; belongs to the sugar phosphate cyclases superfamily. Dehydroquinate synthase family. It in the 2nd section; belongs to the EPSP synthase family. This sequence in the 3rd section; belongs to the shikimate kinase family. In the 4th section; belongs to the type-I 3-dehydroquinase family. The protein in the C-terminal section; belongs to the shikimate dehydrogenase family. Homodimer. Zn(2+) serves as cofactor.

The protein localises to the cytoplasm. It catalyses the reaction 7-phospho-2-dehydro-3-deoxy-D-arabino-heptonate = 3-dehydroquinate + phosphate. It carries out the reaction 3-dehydroquinate = 3-dehydroshikimate + H2O. The catalysed reaction is shikimate + NADP(+) = 3-dehydroshikimate + NADPH + H(+). The enzyme catalyses shikimate + ATP = 3-phosphoshikimate + ADP + H(+). It catalyses the reaction 3-phosphoshikimate + phosphoenolpyruvate = 5-O-(1-carboxyvinyl)-3-phosphoshikimate + phosphate. It functions in the pathway metabolic intermediate biosynthesis; chorismate biosynthesis; chorismate from D-erythrose 4-phosphate and phosphoenolpyruvate: step 2/7. Its pathway is metabolic intermediate biosynthesis; chorismate biosynthesis; chorismate from D-erythrose 4-phosphate and phosphoenolpyruvate: step 3/7. It participates in metabolic intermediate biosynthesis; chorismate biosynthesis; chorismate from D-erythrose 4-phosphate and phosphoenolpyruvate: step 4/7. The protein operates within metabolic intermediate biosynthesis; chorismate biosynthesis; chorismate from D-erythrose 4-phosphate and phosphoenolpyruvate: step 5/7. It functions in the pathway metabolic intermediate biosynthesis; chorismate biosynthesis; chorismate from D-erythrose 4-phosphate and phosphoenolpyruvate: step 6/7. The AROM polypeptide catalyzes 5 consecutive enzymatic reactions in prechorismate polyaromatic amino acid biosynthesis. The sequence is that of Pentafunctional AROM polypeptide from Uncinocarpus reesii (strain UAMH 1704).